A 287-amino-acid polypeptide reads, in one-letter code: Large ribosomal subunit protein uL3 (287 aa).

The tract at residues K228–K287 is disordered. Positions K269–K287 are enriched in basic and acidic residues.

It belongs to the universal ribosomal protein uL3 family. As to quaternary structure, part of the 50S ribosomal subunit. Forms a cluster with proteins L14 and L19.

Its function is as follows. One of the primary rRNA binding proteins, it binds directly near the 3'-end of the 23S rRNA, where it nucleates assembly of the 50S subunit. The chain is Large ribosomal subunit protein uL3 from Mycoplasma pneumoniae (strain ATCC 29342 / M129 / Subtype 1) (Mycoplasmoides pneumoniae).